The following is a 311-amino-acid chain: Ribonuclease HIII (311 aa).

Residues 95 to 311 (MSIVGSDEVG…NTEKAFRLLK (217 aa)) form the RNase H type-2 domain. Residues Asp-101, Glu-102, and Asp-206 each coordinate a divalent metal cation.

Belongs to the RNase HII family. RnhC subfamily. It depends on Mn(2+) as a cofactor. Mg(2+) serves as cofactor.

Its subcellular location is the cytoplasm. The catalysed reaction is Endonucleolytic cleavage to 5'-phosphomonoester.. Its function is as follows. Endonuclease that specifically degrades the RNA of RNA-DNA hybrids. This is Ribonuclease HIII from Bacillus thuringiensis subsp. konkukian (strain 97-27).